Consider the following 245-residue polypeptide: MLKATGPLSIILLASTCPSSGAAPLSFAEFNNFARECAPSVAPSTLAAIAQVESRFDPLAVHDNTTGETLHWQNQAQATQVVMDRLEARHSLDVGLMQINSRNFSVLGLTPDGALQPCTSLSVAANLLGSRYAGGNTADDEQLSLRRAISAYNTGDFTHGFANGYVRKVETAAQQLVPPLTARPKDDREKPGSEETWDVWGAYKRRSPEGGAGGSSGPPPPPDEDNRKSEDDDQLLFDLNQGGPQ.

An N-terminal signal peptide occupies residues 1–28 (MLKATGPLSIILLASTCPSSGAAPLSFA). The segment at 176 to 245 (LVPPLTARPK…LFDLNQGGPQ (70 aa)) is disordered. The span at 183–193 (RPKDDREKPGS) shows a compositional bias: basic and acidic residues.

This sequence belongs to the virb1 family.

Functionally, virB proteins are suggested to act at the bacterial surface and there play an important role in directing T-DNA transfer to plant cells. The sequence is that of Protein virB1 (virB1) from Agrobacterium fabrum (strain C58 / ATCC 33970) (Agrobacterium tumefaciens (strain C58)).